The sequence spans 261 residues: Enolase-phosphatase E1 (261 aa).

Residues Asp-16 and Glu-18 each coordinate Mg(2+). Residues 153–154 and Lys-187 each bind substrate; that span reads SS. Residue Asp-212 coordinates Mg(2+).

It belongs to the HAD-like hydrolase superfamily. MasA/MtnC family. As to quaternary structure, monomer. Mg(2+) is required as a cofactor.

The protein localises to the cytoplasm. It localises to the nucleus. It catalyses the reaction 5-methylsulfanyl-2,3-dioxopentyl phosphate + H2O = 1,2-dihydroxy-5-(methylsulfanyl)pent-1-en-3-one + phosphate. The protein operates within amino-acid biosynthesis; L-methionine biosynthesis via salvage pathway; L-methionine from S-methyl-5-thio-alpha-D-ribose 1-phosphate: step 3/6. It functions in the pathway amino-acid biosynthesis; L-methionine biosynthesis via salvage pathway; L-methionine from S-methyl-5-thio-alpha-D-ribose 1-phosphate: step 4/6. In terms of biological role, bifunctional enzyme that catalyzes the enolization of 2,3-diketo-5-methylthiopentyl-1-phosphate (DK-MTP-1-P) into the intermediate 2-hydroxy-3-keto-5-methylthiopentenyl-1-phosphate (HK-MTPenyl-1-P), which is then dephosphorylated to form the acireductone 1,2-dihydroxy-3-keto-5-methylthiopentene (DHK-MTPene). This chain is Enolase-phosphatase E1 (enoph1), found in Danio rerio (Zebrafish).